Reading from the N-terminus, the 469-residue chain is uncharacterized protein (469 aa).

Residues 152–161 show a composition bias toward basic and acidic residues; it reads VREGKEEKKG. A disordered region spans residues 152–174; it reads VREGKEEKKGGPPGRGPPGWRRR. 2 coiled-coil regions span residues 346 to 375 and 423 to 453; these read KAAL…RSES and SDIT…KIKG.

This is an uncharacterized protein from Homo sapiens (Human).